The primary structure comprises 117 residues: Large ribosomal subunit protein bL20 (117 aa).

It belongs to the bacterial ribosomal protein bL20 family.

Functionally, binds directly to 23S ribosomal RNA and is necessary for the in vitro assembly process of the 50S ribosomal subunit. It is not involved in the protein synthesizing functions of that subunit. The chain is Large ribosomal subunit protein bL20 from Rickettsia africae (strain ESF-5).